The following is a 538-amino-acid chain: Chaperonin GroEL (538 aa).

ATP-binding positions include T29–P32, D86–T90, G413, D479–L481, and D495.

Belongs to the chaperonin (HSP60) family. In terms of assembly, forms a cylinder of 14 subunits composed of two heptameric rings stacked back-to-back. Interacts with the co-chaperonin GroES.

It localises to the cytoplasm. It catalyses the reaction ATP + H2O + a folded polypeptide = ADP + phosphate + an unfolded polypeptide.. Its function is as follows. Together with its co-chaperonin GroES, plays an essential role in assisting protein folding. The GroEL-GroES system forms a nano-cage that allows encapsulation of the non-native substrate proteins and provides a physical environment optimized to promote and accelerate protein folding. This chain is Chaperonin GroEL, found in Thermotoga maritima (strain ATCC 43589 / DSM 3109 / JCM 10099 / NBRC 100826 / MSB8).